The chain runs to 322 residues: CMP-sialic acid transporter 1 (322 aa).

Over M1–Q2 the chain is Cytoplasmic. Residues W3–L23 traverse the membrane as a helical segment. The Lumenal portion of the chain corresponds to S24 to D33. The helical transmembrane segment at Y34–W54 threads the bilayer. Over K55 to Y75 the chain is Cytoplasmic. A helical membrane pass occupies residues L76–V96. The Lumenal segment spans residues D97–T100. The helical transmembrane segment at Y101–L120 threads the bilayer. Over K121–N126 the chain is Cytoplasmic. Residues L127–V144 traverse the membrane as a helical segment. Residues K145 to S157 are Lumenal-facing. A helical transmembrane segment spans residues A158 to V178. The Cytoplasmic portion of the chain corresponds to Y179 to L198. Residues Y199 to F219 traverse the membrane as a helical segment. The Lumenal segment spans residues E220 to S233. Residues I234–M254 traverse the membrane as a helical segment. At K255 to K262 the chain is on the cytoplasmic side. The helical transmembrane segment at V263–V283 threads the bilayer. Residues R284 to T286 are Lumenal-facing.

This sequence belongs to the nucleotide-sugar transporter family. CMP-Sialate:CMP antiporter (TC 2.A.7.12) subfamily. In terms of tissue distribution, expressed in roots, leaves and stalks.

The protein localises to the golgi apparatus membrane. Its function is as follows. Sugar transporter involved in the transport of CMP-sialic acid from the cytoplasm into the Golgi. May transport important nucleotide sugars such as CMP-Kdo (2-keto-3-deoxy-D-manno-octulosonic acid) in physiological conditions. The polypeptide is CMP-sialic acid transporter 1 (Oryza sativa subsp. japonica (Rice)).